Consider the following 272-residue polypeptide: MALGDANVGSAPGVDFSALQRVKQSEELLAQLYVVEETPRRLGRGPVHALMVISVLSVVAFIATLLMRYNTFVTMSEDTQAKRSNYEVMIQRRDNLFGNLVKLTLNHAALEHSIFSHTSDKRTEGVEAGKGGPIGSALEQLMKQGGIGKLLGDIGGGKALLGADGGFGNALGRLMAVVEQYPTIQSVDTYKHMMTSLVEMEDRIATRREDYNAAASTYNIEITKWPWNYLAFITGFKRAEYFQEKPAGDTPIITPQLFQELLPLNHAQDIKK.

The Cytoplasmic segment spans residues 1–46; the sequence is MALGDANVGSAPGVDFSALQRVKQSEELLAQLYVVEETPRRLGRGP. Residues 47 to 67 form a helical membrane-spanning segment; the sequence is VHALMVISVLSVVAFIATLLM. The Lumenal portion of the chain corresponds to 68–272; sequence RYNTFVTMSE…PLNHAQDIKK (205 aa).

Belongs to the LemA family.

It localises to the magnetosome membrane. Its function is as follows. Essential for magnetosome formation. Can be used to induce magnetosome formation. The protein is Magnetosome protein MamQ 1 (mamQ1) of Paramagnetospirillum magneticum (strain ATCC 700264 / AMB-1) (Magnetospirillum magneticum).